Consider the following 918-residue polypeptide: NEDD4-like E3 ubiquitin-protein ligase WWP1 (918 aa).

The C2 domain maps to 1–116 (MATASPRSDT…THNRKLEKVK (116 aa)). Polar residues-rich tracts occupy residues 150-164 (TNRS…QQNG), 209-219 (NGENTPSSPSQ), and 235-258 (SAPT…STMG). Disordered regions lie at residues 150 to 182 (TNRS…PRLP) and 209 to 360 (NGEN…PHGR). The segment covering 266 to 281 (TTSTSNCTSTTTQEPP) has biased composition (low complexity). 4 consecutive WW domains span residues 345–378 (EALP…RPQP), 377–410 (QPLP…RPTM), 452–485 (GPLP…DPRT), and 492–525 (EPLP…DPRN). The interaction with ERBB4 stretch occupies residues 345–525 (EALPSGWEQR…RTTTFKDPRN (181 aa)). The tract at residues 345 to 527 (EALPSGWEQR…TTFKDPRNGK (183 aa)) is required for interaction with and ubiquitination of AMOTL2. Required for interaction with YAP1. One can recognise an HECT domain in the interval 584–918 (KPYDLRRRLY…IEETEGFGQE (335 aa)). Cysteine 886 acts as the Glycyl thioester intermediate in catalysis.

Interacts with the Crumbs complex components PALS1 and PATJ; interaction with the Crumbs complex is enhanced by WWP1's interaction with AMOTL2 and facilitates WWP1 localization to the plasma membrane. Interaction with the Crumbs complex promotes WWP1 monoubiquitination of AMOTL2, which activates the Hippo signaling pathway. Binds SCNN1A, SCNN1B, SCNN1G, WBP1, WBP2, DRPLA and adenovirus type 2 PIII. Interacts with TGIF. Binds KLF2 AND HIVEP3. Interacts with RNF11. Interacts with SPART. Interacts with NDFIP1 and NDFIP2; this interaction activates the E3 ubiquitin-protein ligase. Interacts with ERBB4 isoforms JM-B CYT-1 and JM-A CYT-1. Does not interact with ERB4 isoform JMA-A CYT-2. Interacts with SMAD1, SMAD2, SMAD3, SMAD5, SMAD6, SMAD7, TGFBR1 and TGFBR2. Associates with the TGFBR1:TGFBR2 receptor complex in presence of SMAD7. Interacts with SKIL isoform 1. Interacts with TP63 isoform 1 and isoform 2. Interacts (via WW domains) with ARRDC1, ARRDC2 and ARRDC3. Post-translationally, auto-ubiquitinated and ubiquitinated by RNF11.

It localises to the cytoplasm. The protein localises to the cell membrane. The protein resides in the nucleus. Its subcellular location is the cell junction. The enzyme catalyses S-ubiquitinyl-[E2 ubiquitin-conjugating enzyme]-L-cysteine + [acceptor protein]-L-lysine = [E2 ubiquitin-conjugating enzyme]-L-cysteine + N(6)-ubiquitinyl-[acceptor protein]-L-lysine.. It functions in the pathway protein modification; protein ubiquitination. Activated by NDFIP1- and NDFIP2-binding. Its function is as follows. E3 ubiquitin-protein ligase which accepts ubiquitin from an E2 ubiquitin-conjugating enzyme in the form of a thioester and then directly transfers the ubiquitin to targeted substrates. Ubiquitinates and promotes degradation of SMAD2 in response to TGF-beta signaling, which requires interaction with TGIF. Ubiquitinates ERBB4 isoforms JM-A CYT-1 and JM-B CYT-1, KLF2, KLF5 and TP63 and promotes their proteasomal degradation. Ubiquitinates RNF11 without targeting it for degradation. Ubiquitinates and promotes degradation of TGFBR1; the ubiquitination is enhanced by SMAD7. Ubiquitinates SMAD6 and SMAD7. Activates the Hippo signaling pathway in response to cell contact inhibition and recruitment to the Crumbs complex at the cell membrane. Monoubiquitinates AMOTL2 which facilitates its interaction with and activation of LATS2. LATS2 then phosphorylates YAP1, excluding it from the nucleus and therefore ultimately represses YAP1-driven transcription of target genes. The protein is NEDD4-like E3 ubiquitin-protein ligase WWP1 (Wwp1) of Mus musculus (Mouse).